The following is a 501-amino-acid chain: Aldehyde dehydrogenase 1A1 (501 aa).

Position 2 is an N-acetylserine (Ser-2). Residues Lys-91 and Lys-128 each carry the N6-acetyllysine modification. Residues 167 to 170 (IPWN), 193 to 196 (KPAE), 226 to 227 (GP), and 246 to 247 (GS) each bind NAD(+). Residue Lys-252 is modified to N6-acetyllysine. Residue Glu-269 is the Proton acceptor of the active site. Residue 269–271 (ELG) coordinates NAD(+). Residue Cys-303 is the Nucleophile of the active site. Residues 336–501 (LTPGATQGPQ…VTVKISQKNS (166 aa)) form a mediates interaction with PRMT3 region. At Thr-337 the chain carries Phosphothreonine. 349 to 353 (EQYDK) lines the NAD(+) pocket. 2 positions are modified to N6-acetyllysine: Lys-353 and Lys-367. Position 400-402 (400-402 (EIF)) interacts with NAD(+). The residue at position 410 (Lys-410) is an N6-acetyllysine. Ser-413 carries the phosphoserine modification. N6-acetyllysine occurs at positions 419 and 495.

This sequence belongs to the aldehyde dehydrogenase family. Homotetramer. Interacts with PRMT3; the interaction is direct, inhibits ALDH1A1 aldehyde dehydrogenase activity and is independent of the methyltransferase activity of PRMT3. Post-translationally, the N-terminus is blocked most probably by acetylation.

It is found in the cytoplasm. The protein localises to the cytosol. The protein resides in the cell projection. It localises to the axon. It catalyses the reaction an aldehyde + NAD(+) + H2O = a carboxylate + NADH + 2 H(+). The enzyme catalyses all-trans-retinal + NAD(+) + H2O = all-trans-retinoate + NADH + 2 H(+). The catalysed reaction is 9-cis-retinal + NAD(+) + H2O = 9-cis-retinoate + NADH + 2 H(+). It carries out the reaction 11-cis-retinal + NAD(+) + H2O = 11-cis-retinoate + NADH + 2 H(+). It catalyses the reaction 13-cis-retinal + NAD(+) + H2O = 13-cis-retinoate + NADH + 2 H(+). The enzyme catalyses 3-deoxyglucosone + NAD(+) + H2O = 2-dehydro-3-deoxy-D-gluconate + NADH + 2 H(+). The catalysed reaction is (E)-4-hydroxynon-2-enal + NAD(+) + H2O = (E)-4-hydroxynon-2-enoate + NADH + 2 H(+). It carries out the reaction malonaldehyde + NAD(+) + H2O = 3-oxopropanoate + NADH + 2 H(+). It catalyses the reaction hexanal + NAD(+) + H2O = hexanoate + NADH + 2 H(+). The enzyme catalyses propanal + NAD(+) + H2O = propanoate + NADH + 2 H(+). The catalysed reaction is acetaldehyde + NAD(+) + H2O = acetate + NADH + 2 H(+). It carries out the reaction benzaldehyde + NAD(+) + H2O = benzoate + NADH + 2 H(+). It catalyses the reaction 4-aminobutanal + NAD(+) + H2O = 4-aminobutanoate + NADH + 2 H(+). The protein operates within cofactor metabolism; retinol metabolism. In terms of biological role, cytosolic dehydrogenase that catalyzes the irreversible oxidation of a wide range of aldehydes to their corresponding carboxylic acid. Functions downstream of retinol dehydrogenases and catalyzes the oxidation of retinaldehyde into retinoic acid, the second step in the oxidation of retinol/vitamin A into retinoic acid. This pathway is crucial to control the levels of retinol and retinoic acid, two important molecules which excess can be teratogenic and cytotoxic. Also oxidizes aldehydes resulting from lipid peroxidation like (E)-4-hydroxynon-2-enal/HNE, malonaldehyde and hexanal that form protein adducts and are highly cytotoxic. By participating for instance to the clearance of (E)-4-hydroxynon-2-enal/HNE in the lens epithelium prevents the formation of HNE-protein adducts and lens opacification. Also functions downstream of fructosamine-3-kinase in the fructosamine degradation pathway by catalyzing the oxidation of 3-deoxyglucosone, the carbohydrate product of fructosamine 3-phosphate decomposition, which is itself a potent glycating agent that may react with lysine and arginine side-chains of proteins. Also has an aminobutyraldehyde dehydrogenase activity and is probably part of an alternative pathway for the biosynthesis of GABA/4-aminobutanoate in midbrain, thereby playing a role in GABAergic synaptic transmission. This Macaca fascicularis (Crab-eating macaque) protein is Aldehyde dehydrogenase 1A1.